Consider the following 123-residue polypeptide: Ribosome-binding factor A (123 aa).

It belongs to the RbfA family. As to quaternary structure, monomer. Binds 30S ribosomal subunits, but not 50S ribosomal subunits or 70S ribosomes.

It is found in the cytoplasm. One of several proteins that assist in the late maturation steps of the functional core of the 30S ribosomal subunit. Associates with free 30S ribosomal subunits (but not with 30S subunits that are part of 70S ribosomes or polysomes). Required for efficient processing of 16S rRNA. May interact with the 5'-terminal helix region of 16S rRNA. The polypeptide is Ribosome-binding factor A (Ralstonia nicotianae (strain ATCC BAA-1114 / GMI1000) (Ralstonia solanacearum)).